A 364-amino-acid chain; its full sequence is Alanine racemase (364 aa).

The active-site Proton acceptor; specific for D-alanine is lysine 34. Lysine 34 carries the N6-(pyridoxal phosphate)lysine modification. Substrate is bound at residue arginine 129. Catalysis depends on tyrosine 259, which acts as the Proton acceptor; specific for L-alanine. A substrate-binding site is contributed by methionine 307.

It belongs to the alanine racemase family. Requires pyridoxal 5'-phosphate as cofactor.

It carries out the reaction L-alanine = D-alanine. It functions in the pathway amino-acid biosynthesis; D-alanine biosynthesis; D-alanine from L-alanine: step 1/1. Functionally, catalyzes the interconversion of L-alanine and D-alanine. May also act on other amino acids. The polypeptide is Alanine racemase (alr) (Coxiella burnetii (strain RSA 493 / Nine Mile phase I)).